A 93-amino-acid polypeptide reads, in one-letter code: Small ribosomal subunit protein bS18 (93 aa).

Basic residues predominate over residues 1-11; it reads MAPSARNRKPG. The segment at 1–27 is disordered; that stretch reads MAPSARNRKPGARSMAKAAALRKPKKK.

This sequence belongs to the bacterial ribosomal protein bS18 family. Part of the 30S ribosomal subunit. Forms a tight heterodimer with protein bS6.

Its function is as follows. Binds as a heterodimer with protein bS6 to the central domain of the 16S rRNA, where it helps stabilize the platform of the 30S subunit. In Salinispora tropica (strain ATCC BAA-916 / DSM 44818 / JCM 13857 / NBRC 105044 / CNB-440), this protein is Small ribosomal subunit protein bS18.